We begin with the raw amino-acid sequence, 424 residues long: Serine hydroxymethyltransferase 2 (424 aa).

(6S)-5,6,7,8-tetrahydrofolate contacts are provided by residues L125 and 129-131 (GHL). K234 bears the N6-(pyridoxal phosphate)lysine mark. Residue E250 coordinates (6S)-5,6,7,8-tetrahydrofolate.

It belongs to the SHMT family. As to quaternary structure, homodimer. Requires pyridoxal 5'-phosphate as cofactor.

It is found in the cytoplasm. It carries out the reaction (6R)-5,10-methylene-5,6,7,8-tetrahydrofolate + glycine + H2O = (6S)-5,6,7,8-tetrahydrofolate + L-serine. It functions in the pathway one-carbon metabolism; tetrahydrofolate interconversion. Its pathway is amino-acid biosynthesis; glycine biosynthesis; glycine from L-serine: step 1/1. Functionally, catalyzes the reversible interconversion of serine and glycine with tetrahydrofolate (THF) serving as the one-carbon carrier. This reaction serves as the major source of one-carbon groups required for the biosynthesis of purines, thymidylate, methionine, and other important biomolecules. Also exhibits THF-independent aldolase activity toward beta-hydroxyamino acids, producing glycine and aldehydes, via a retro-aldol mechanism. The sequence is that of Serine hydroxymethyltransferase 2 from Cupriavidus pinatubonensis (strain JMP 134 / LMG 1197) (Cupriavidus necator (strain JMP 134)).